Here is a 299-residue protein sequence, read N- to C-terminus: Protease HtpX homolog (299 aa).

Helical transmembrane passes span Ile14–Leu34 and Ala39–Gly59. His144 is a Zn(2+) binding site. Glu145 is an active-site residue. His148 is a binding site for Zn(2+). The next 2 helical transmembrane spans lie at Ile159–Trp179 and Val196–Val216. Residue Glu225 participates in Zn(2+) binding.

It belongs to the peptidase M48B family. Zn(2+) serves as cofactor.

It is found in the cell membrane. This chain is Protease HtpX homolog, found in Limosilactobacillus fermentum (strain NBRC 3956 / LMG 18251) (Lactobacillus fermentum).